We begin with the raw amino-acid sequence, 117 residues long: MDTETSPLLSHNLSTREGIKQSTQGFLAHTIARHPGITAIILGILILLVIILIVVAIVYYNRSVDCKSTMPKLPPPGYYVQQPEPHHHFPVFFRKRKNSTTQQHIPSDEQLAELAHS.

N-linked (GlcNAc...) asparagine; by host glycosylation is present at Asn12. Residues 39–59 traverse the membrane as a helical segment; the sequence is AIILGILILLVIILIVVAIVY. Asn61 and Asn98 each carry an N-linked (GlcNAc...) asparagine; by host glycan. The segment at 97–117 is disordered; that stretch reads KNSTTQQHIPSDEQLAELAHS.

The protein belongs to the asfivirus minor capsid protein p17 family. Interacts with the minor capsid protein M1249L and with the hexon capsid protein p72 capsomers; these interactions form a rigid zipper structure that stabilizes the capsomers. Interacts with host STING1.

The protein localises to the virion membrane. Its subcellular location is the host endoplasmic reticulum membrane. Functionally, together with the penton and the other minor capsid proteins (M1249L, p49), forms a complicated network immediately below the outer capsid shell, stabilizing the whole capsid. Three copies of p17 encircle each p72 capsomer in the inner capsid shell, anchoring p72 capsomers on the inner membrane. Required for the assembly of the capsid and icosahedral morphogenesis. Additionally, inhibits the host cGAS-STING pathway through its interaction with STING1 and subsequent interference of the recruitment of downstream components TBK1 and IKBKE. This Ornithodoros (relapsing fever ticks) protein is Minor capsid protein p17.